Here is a 239-residue protein sequence, read N- to C-terminus: MKDDVLKRQAHTAIQKKLGYAFRDMSLLRRALTHRSHHAKHNERFEFVGDSILNYTVARMLFDAFPKLTEGELSRLRASLVNEGVLAEMAAEMNVGDGLYLGAGELKSSGFRRPSILADAMEAMFAAVSFDADFNTAEKVVRHLFAERVRRADFQNQAKDGKTALQEALQARRFALPKYRIEEQIGHADDSMFVISCDLGELGFVCRAKGTSRKAAEQEAAKEALKWLEEKLPLKKKKK.

Residues histidine 11–aspartate 133 enclose the RNase III domain. Glutamate 46 serves as a coordination point for Mg(2+). Residue aspartate 50 is part of the active site. Residues aspartate 119 and glutamate 122 each coordinate Mg(2+). Residue glutamate 122 is part of the active site. A DRBM domain is found at aspartate 160 to glutamate 230.

The protein belongs to the ribonuclease III family. In terms of assembly, homodimer. Requires Mg(2+) as cofactor.

It localises to the cytoplasm. The enzyme catalyses Endonucleolytic cleavage to 5'-phosphomonoester.. Digests double-stranded RNA. Involved in the processing of primary rRNA transcript to yield the immediate precursors to the large and small rRNAs (23S and 16S). Processes some mRNAs, and tRNAs when they are encoded in the rRNA operon. Processes pre-crRNA and tracrRNA of type II CRISPR loci if present in the organism. The protein is Ribonuclease 3 of Neisseria gonorrhoeae (strain ATCC 700825 / FA 1090).